Reading from the N-terminus, the 300-residue chain is tRNA pseudouridine synthase B (300 aa).

The active-site Nucleophile is D41.

This sequence belongs to the pseudouridine synthase TruB family. Type 1 subfamily.

The catalysed reaction is uridine(55) in tRNA = pseudouridine(55) in tRNA. Functionally, responsible for synthesis of pseudouridine from uracil-55 in the psi GC loop of transfer RNAs. This is tRNA pseudouridine synthase B from Synechococcus sp. (strain WH7803).